Consider the following 380-residue polypeptide: Zinc finger protein neuro-d4 (380 aa).

Residues 132–164 are disordered; sequence ALLDCQKPPPGDFAHDAEGDEMEDDAPRRKNKA. A C2H2-type zinc finger spans residues 190–213; sequence YVCDICGKRYKNRPGLSYHYTHTH. 2 PHD-type zinc fingers span residues 262 to 321 and 318 to 368; these read EGPC…CKNC and CKNC…CLRQ. 16 residues coordinate Zn(2+): Cys265, Cys268, Cys286, Cys289, His294, Cys297, Cys315, Cys318, Cys321, Cys324, Cys336, Cys339, His344, Cys347, Cys362, and Cys365.

Belongs to the requiem/DPF family. Component of neuron-specific chromatin remodeling complex (nBAF complex), a subfamily of ATP-dependent SWI/SNF chromatin remodeling complexes.

It is found in the cytoplasm. It localises to the nucleus. May have an important role in developing neurons by participating in regulation of cell survival, possibly as a neurospecific transcription factor. Belongs to the neuron-specific chromatin remodeling complex (nBAF complex) and plays a role in neural development. In Gallus gallus (Chicken), this protein is Zinc finger protein neuro-d4.